We begin with the raw amino-acid sequence, 185 residues long: uncharacterized protein (185 aa).

Positions methionine 1–alanine 29 are cleaved as a signal peptide. Positions lysine 41–threonine 66 are disordered.

In terms of processing, glycosylated; by Pmt.

Its subcellular location is the secreted. This is an uncharacterized protein from Corynebacterium glutamicum (strain ATCC 13032 / DSM 20300 / JCM 1318 / BCRC 11384 / CCUG 27702 / LMG 3730 / NBRC 12168 / NCIMB 10025 / NRRL B-2784 / 534).